Here is a 476-residue protein sequence, read N- to C-terminus: Cysteine--tRNA ligase (476 aa).

Residue Cys36 coordinates Zn(2+). Positions 38-48 (PTVYDYAHIGN) match the 'HIGH' region motif. Zn(2+)-binding residues include Cys221, His246, and Glu250. Residues 278–282 (KMSKS) carry the 'KMSKS' region motif. Residue Lys281 participates in ATP binding.

This sequence belongs to the class-I aminoacyl-tRNA synthetase family. In terms of assembly, monomer. Zn(2+) serves as cofactor.

The protein localises to the cytoplasm. The enzyme catalyses tRNA(Cys) + L-cysteine + ATP = L-cysteinyl-tRNA(Cys) + AMP + diphosphate. The polypeptide is Cysteine--tRNA ligase (Chlamydia abortus (strain DSM 27085 / S26/3) (Chlamydophila abortus)).